Here is a 368-residue protein sequence, read N- to C-terminus: Flagellar P-ring protein (368 aa).

Positions 1–22 (MLIPLARAVLALALLGAGAAHA) are cleaved as a signal peptide.

This sequence belongs to the FlgI family. The basal body constitutes a major portion of the flagellar organelle and consists of four rings (L,P,S, and M) mounted on a central rod.

Its subcellular location is the periplasm. The protein localises to the bacterial flagellum basal body. In terms of biological role, assembles around the rod to form the L-ring and probably protects the motor/basal body from shearing forces during rotation. The protein is Flagellar P-ring protein of Bordetella bronchiseptica (strain ATCC BAA-588 / NCTC 13252 / RB50) (Alcaligenes bronchisepticus).